A 336-amino-acid chain; its full sequence is tRNA N6-adenosine threonylcarbamoyltransferase (336 aa).

Fe cation-binding residues include H111, H115, and Y132. Residues 132–136 (YLSGG), D164, D185, and S264 contribute to the substrate site. Fe cation is bound at residue D292.

The protein belongs to the KAE1 / TsaD family. The cofactor is Fe(2+).

The protein localises to the cytoplasm. The catalysed reaction is L-threonylcarbamoyladenylate + adenosine(37) in tRNA = N(6)-L-threonylcarbamoyladenosine(37) in tRNA + AMP + H(+). In terms of biological role, required for the formation of a threonylcarbamoyl group on adenosine at position 37 (t(6)A37) in tRNAs that read codons beginning with adenine. Is probably involved in the transfer of the threonylcarbamoyl moiety of threonylcarbamoyl-AMP (TC-AMP) to the N6 group of A37. This is tRNA N6-adenosine threonylcarbamoyltransferase from Sulfurisphaera tokodaii (strain DSM 16993 / JCM 10545 / NBRC 100140 / 7) (Sulfolobus tokodaii).